Consider the following 457-residue polypeptide: Multidrug resistance protein MdtK (457 aa).

The next 12 helical transmembrane spans lie at 11–31 (LLAL…MGFV), 53–73 (IWLP…PVIA), 93–113 (WLAG…GYII), 127–147 (AVGY…FQVA), 160–180 (GMVM…IFIY), 189–209 (GGVG…LAMV), 243–263 (LPIA…ALLV), 276–296 (IALN…AAVT), 314–334 (AART…IFTV), 350–370 (VVTL…SDSI), 387–407 (IFYI…YILA), and 418–438 (PAGF…MMML).

This sequence belongs to the multi antimicrobial extrusion (MATE) (TC 2.A.66.1) family. MdtK subfamily.

Its subcellular location is the cell inner membrane. Functionally, multidrug efflux pump that functions probably as a Na(+)/drug antiporter. The sequence is that of Multidrug resistance protein MdtK from Escherichia coli O45:K1 (strain S88 / ExPEC).